The sequence spans 202 residues: Imidazoleglycerol-phosphate dehydratase (202 aa).

Belongs to the imidazoleglycerol-phosphate dehydratase family.

Its subcellular location is the cytoplasm. It catalyses the reaction D-erythro-1-(imidazol-4-yl)glycerol 3-phosphate = 3-(imidazol-4-yl)-2-oxopropyl phosphate + H2O. Its pathway is amino-acid biosynthesis; L-histidine biosynthesis; L-histidine from 5-phospho-alpha-D-ribose 1-diphosphate: step 6/9. This Sinorhizobium medicae (strain WSM419) (Ensifer medicae) protein is Imidazoleglycerol-phosphate dehydratase.